Consider the following 207-residue polypeptide: Large ribosomal subunit protein bL25 (207 aa).

The interval 171 to 207 (ESVVTVEVPEDATESTTAPEAAAAPADAAAAPAADAK) is disordered. Positions 184–207 (ESTTAPEAAAAPADAAAAPAADAK) are enriched in low complexity.

This sequence belongs to the bacterial ribosomal protein bL25 family. CTC subfamily. As to quaternary structure, part of the 50S ribosomal subunit; part of the 5S rRNA/L5/L18/L25 subcomplex. Contacts the 5S rRNA. Binds to the 5S rRNA independently of L5 and L18.

Its function is as follows. This is one of the proteins that binds to the 5S RNA in the ribosome where it forms part of the central protuberance. The chain is Large ribosomal subunit protein bL25 from Bifidobacterium longum subsp. infantis (strain ATCC 15697 / DSM 20088 / JCM 1222 / NCTC 11817 / S12).